A 989-amino-acid polypeptide reads, in one-letter code: Phosphoenolpyruvate carboxylase (989 aa).

Catalysis depends on residues H175 and K630.

It belongs to the PEPCase type 1 family. Mg(2+) is required as a cofactor.

It carries out the reaction oxaloacetate + phosphate = phosphoenolpyruvate + hydrogencarbonate. In terms of biological role, forms oxaloacetate, a four-carbon dicarboxylic acid source for the tricarboxylic acid cycle. This Prochlorococcus marinus (strain MIT 9215) protein is Phosphoenolpyruvate carboxylase.